The sequence spans 475 residues: Melanopsin (475 aa).

Topologically, residues 1–21 (MGTQHRIKVDVPDRVLYTVGS) are extracellular. The chain crosses the membrane as a helical span at residues 22-42 (CVLVIGSIGITGNLLVLYAFY). Residues 43–53 (SNKRLRTPANY) are Cytoplasmic-facing. A helical membrane pass occupies residues 54–74 (FIMNLAASDFLMSATQAPICF). Topologically, residues 75–90 (LNSMHTEWILGDIGCN) are extracellular. Residues Cys89 and Cys167 are joined by a disulfide bond. Residues 91–111 (FYVFCGALFGITSMMTLLAIS) form a helical membrane-spanning segment. The Cytoplasmic segment spans residues 112–134 (VDRYCVITKPLQSIKRSSKKRSC). The chain crosses the membrane as a helical span at residues 135-155 (IIIAFVWLYSLGWSVCPLFGW). The Extracellular portion of the chain corresponds to 156–187 (SSYIPEGLMISCTWDYVSYSPANRSYTMMLCC). Asn178 carries an N-linked (GlcNAc...) asparagine glycan. Residues 188 to 208 (FVFFIPLIIIFHCYLFMFLAI) form a helical membrane-spanning segment. Residues 209–240 (RSTGRNVQKLGSTYNRKSNVSQSVKSEWKLAK) lie on the Cytoplasmic side of the membrane. Residues 241-261 (IAFVAIVVFVLSWSPYACVTL) traverse the membrane as a helical segment. The Extracellular portion of the chain corresponds to 262–276 (IAWAGYAKTLNPYSK). The chain crosses the membrane as a helical span at residues 277-297 (SVPAVIAKASAIYNPIIYAII). Position 284 is an N6-(retinylidene)lysine (Lys284). The Cytoplasmic portion of the chain corresponds to 298–475 (HPRYRRTIRS…EQHQMEASSH (178 aa)). 2 disordered regions span residues 370–390 (VEAA…KQAE) and 445–475 (PFGL…ASSH). The segment covering 375–384 (KKQQPHRSRS) has biased composition (basic residues). Over residues 445–454 (PFGLNSSSTE) the composition is skewed to polar residues. The span at 455-464 (ENADTSDMEV) shows a compositional bias: acidic residues. Basic and acidic residues predominate over residues 465–475 (QEQHQMEASSH).

This sequence belongs to the G-protein coupled receptor 1 family. Opsin subfamily. In terms of tissue distribution, highest level in the lateral eye. Low level in the brain.

The protein localises to the cell membrane. Its function is as follows. Photoreceptor implicated in non-image-forming responses to light. May be able to isomerize covalently bound all-trans retinal back to 11-cis retinal. In Podarcis siculus (Italian wall lizard), this protein is Melanopsin (OPN4).